The following is a 171-amino-acid chain: T-cell surface glycoprotein CD3 delta chain (171 aa).

An N-terminal signal peptide occupies residues 1-21 (MEHSTFLSGLVLATLLSQVSP). At 22–105 (FKIPIEELED…CVELDPATVA (84 aa)) the chain is on the extracellular side. Cys-37 and Cys-73 are joined by a disulfide. N-linked (GlcNAc...) asparagine glycans are attached at residues Asn-38 and Asn-74. The chain crosses the membrane as a helical span at residues 106 to 126 (GIIVTDVIATLLLALGVFCFA). At 127–171 (GHETGRLSGAADTQALLRNDQVYQPLRDRDDAQYSHLGGNWARNK) the chain is on the cytoplasmic side. Positions 138–166 (DTQALLRNDQVYQPLRDRDDAQYSHLGGN) constitute an ITAM domain. 2 positions are modified to phosphotyrosine: Tyr-149 and Tyr-160.

As to quaternary structure, the TCR-CD3 complex is composed of a CD3D/CD3E and a CD3G/CD3E heterodimers that preferentially associate with TCRalpha and TCRbeta, respectively, to form TCRalpha/CD3E/CD3G and TCRbeta/CD3G/CD3E trimers. In turn, the hexamer interacts with CD3Z homodimer to form the TCR-CD3 complex. Alternatively, TCRalpha and TCRbeta can be replaced by TCRgamma and TCRdelta. Interacts with coreceptors CD4 and CD8. Post-translationally, phosphorylated on Tyr residues after T-cell receptor triggering by LCK in association with CD4/CD8. CD3D is mostly present on T-lymphocytes with its TCR-CD3 partners. Present also in fetal NK-cells.

It is found in the cell membrane. Part of the TCR-CD3 complex present on T-lymphocyte cell surface that plays an essential role in adaptive immune response. When antigen presenting cells (APCs) activate T-cell receptor (TCR), TCR-mediated signals are transmitted across the cell membrane by the CD3 chains CD3D, CD3E, CD3G and CD3Z. All CD3 chains contain immunoreceptor tyrosine-based activation motifs (ITAMs) in their cytoplasmic domain. Upon TCR engagement, these motifs become phosphorylated by Src family protein tyrosine kinases LCK and FYN, resulting in the activation of downstream signaling pathways. In addition of this role of signal transduction in T-cell activation, CD3D plays an essential role in thymocyte differentiation. Indeed, participates in correct intracellular TCR-CD3 complex assembly and surface expression. In absence of a functional TCR-CD3 complex, thymocytes are unable to differentiate properly. Interacts with CD4 and CD8 and thus serves to establish a functional link between the TCR and coreceptors CD4 and CD8, which is needed for activation and positive selection of CD4 or CD8 T-cells. This is T-cell surface glycoprotein CD3 delta chain (CD3D) from Homo sapiens (Human).